A 1029-amino-acid chain; its full sequence is Multiple C2 domain and transmembrane region protein 6 (1029 aa).

A C2 1 domain is found at 1–111 (MNKLVVEIVD…SGVQRYPLDK (111 aa)). The disordered stretch occupies residues 187 to 224 (TKKKEKESRTFHSIGAHAGGGGGAPPMSQAKQAYPPPP). C2 domains are found at residues 277–398 (RSSG…PQWY), 437–562 (RVSH…PRWF), and 605–727 (FSSD…THFY). Ca(2+) contacts are provided by Asp310, Asp316, Asp363, Asp365, and Asp371. 2 helical membrane passes run 864-884 (LILVCYPELILPTVFLYLFVI) and 976-996 (FALIWAVFIYVTPFQVIAIII).

The protein belongs to the MCTP family. Requires Ca(2+) as cofactor. As to expression, expressed in the vascular tissues of cotyledons and rosette leaves. Accumulates in roots caps and shoot apical meristems (SAMs). Observed in flowers.

The protein localises to the cell membrane. It localises to the cytoplasm. Its subcellular location is the endosome membrane. Functionally, regulates flowering time under long days. May function as a signaling molecule by regulating the trafficking of other regulators. In Arabidopsis thaliana (Mouse-ear cress), this protein is Multiple C2 domain and transmembrane region protein 6.